A 406-amino-acid polypeptide reads, in one-letter code: Succinylornithine transaminase/acetylornithine aminotransferase (406 aa).

Pyridoxal 5'-phosphate contacts are provided by residues 108–109 (GA) and phenylalanine 141. Arginine 144 lines the N(2)-acetyl-L-ornithine pocket. 226–229 (DEVQ) lines the pyridoxal 5'-phosphate pocket. Lysine 255 is subject to N6-(pyridoxal phosphate)lysine. Threonine 283 is a binding site for N(2)-acetyl-L-ornithine. Threonine 284 provides a ligand contact to pyridoxal 5'-phosphate.

This sequence belongs to the class-III pyridoxal-phosphate-dependent aminotransferase family. ArgD subfamily. As to quaternary structure, homodimer. Requires pyridoxal 5'-phosphate as cofactor.

The protein localises to the cytoplasm. It carries out the reaction N(2)-succinyl-L-ornithine + 2-oxoglutarate = N-succinyl-L-glutamate 5-semialdehyde + L-glutamate. The enzyme catalyses N(2)-acetyl-L-ornithine + 2-oxoglutarate = N-acetyl-L-glutamate 5-semialdehyde + L-glutamate. It participates in amino-acid biosynthesis; L-arginine biosynthesis; N(2)-acetyl-L-ornithine from L-glutamate: step 4/4. It functions in the pathway amino-acid degradation; L-arginine degradation via AST pathway; L-glutamate and succinate from L-arginine: step 3/5. In terms of biological role, transaminates both N(2)-acetylornithine and N(2)-succinylornithine. This chain is Succinylornithine transaminase/acetylornithine aminotransferase (aruC), found in Pseudomonas aeruginosa (strain ATCC 15692 / DSM 22644 / CIP 104116 / JCM 14847 / LMG 12228 / 1C / PRS 101 / PAO1).